The chain runs to 860 residues: Leucine--tRNA ligase (860 aa).

The 'HIGH' region signature appears at 42–52 (PYPSGRLHMGH). A 'KMSKS' region motif is present at residues 619–623 (KMSKS). ATP is bound at residue Lys-622.

The protein belongs to the class-I aminoacyl-tRNA synthetase family.

Its subcellular location is the cytoplasm. The enzyme catalyses tRNA(Leu) + L-leucine + ATP = L-leucyl-tRNA(Leu) + AMP + diphosphate. The sequence is that of Leucine--tRNA ligase from Shigella dysenteriae serotype 1 (strain Sd197).